Here is a 141-residue protein sequence, read N- to C-terminus: Cytochrome c-type biogenesis protein CcmE (141 aa).

The Cytoplasmic portion of the chain corresponds to 1–7 (MQRKHKR). The helical; Signal-anchor for type II membrane protein transmembrane segment at 8–28 (ILFVAVSFIALGCVSAFVLFE) threads the bilayer. Residues 29–141 (LSKSISFFCT…SSDAAVIGSS (113 aa)) lie on the Periplasmic side of the membrane. The heme site is built by histidine 121 and tyrosine 125.

It belongs to the CcmE/CycJ family.

It is found in the cell inner membrane. Its function is as follows. Heme chaperone required for the biogenesis of c-type cytochromes. Transiently binds heme delivered by CcmC and transfers the heme to apo-cytochromes in a process facilitated by CcmF and CcmH. This is Cytochrome c-type biogenesis protein CcmE from Anaplasma phagocytophilum (strain HZ).